Consider the following 744-residue polypeptide: MDHAEENEIPVATQKYHVERPIFSHPVLQERLHVKDKVSESIGDKLKQAFTCTPKKIRNIIYMFLPITKWLPAYKFKEYVLGDLVSGISTGVLQLPQGLAFAMLAAVPPVFGLYSSFYPVIMYCFFGTSRHISIGPFAVISLMIGGVAVRLVPDDIVIPGGVNATNGTEARDALRVKVAMSVTLLSGIIQFCLGVCRFGFVAIYLTEPLVRGFTTAAAVHVFTSMLKYLFGVKTKRYSGIFSVVYSTVAVLQNVKNLNVCSLGVGLMVFGLLLGGKEFNERFKEKLPAPIPLEFFAVVMGTGISAGFNLHESYSVDVVGTLPLGLLPPANPDTSLFHLVYVDAIAIAIVGFSVTISMAKTLANKHGYQVDGNQELIALGICNSIGSLFQTFSISCSLSRSLVQEGTGGKTQLAGCLASLMILLVILATGFLFESLPQAVLSAIVIVNLKGMFMQFSDLPFFWRTSKIELTIWLTTFVSSLFLGLDYGLITAVIIALLTVIYRTQSPSYKVLGQLPDTDVYIDIDAYEEVKEIPGIKIFQINAPIYYANSDLYSNALKRKTGVNPALIMGARRKAMRKYAKEVGNANIANAAVVKVDGEVDGENATKPEEEDDEVKYPPIVIKTTFPEELQRFMPQTENVHTIILDFTQVNFIDSVGVKTLAVMVKEYGDVGIYVYLAGCSPQVVNDLTRNRFFENPALKELLFHSIHDAVLGSHVREAMAEQEASAPPPQDDMEPNATPTTPEA.

Topologically, residues 1–79 are cytoplasmic; that stretch reads MDHAEENEIP…WLPAYKFKEY (79 aa). The helical transmembrane segment at 80-105 threads the bilayer; sequence VLGDLVSGISTGVLQLPQGLAFAMLA. Residues 106-109 lie on the Extracellular side of the membrane; sequence AVPP. The chain crosses the membrane as a helical span at residues 110–125; sequence VFGLYSSFYPVIMYCF. Topologically, residues 126–137 are cytoplasmic; it reads FGTSRHISIGPF. The chain crosses the membrane as a helical span at residues 138–147; sequence AVISLMIGGV. The Extracellular portion of the chain corresponds to 148–178; that stretch reads AVRLVPDDIVIPGGVNATNGTEARDALRVKV. Residues 158-168 carry the Involved in motor function motif; that stretch reads IPGGVNATNGT. N-linked (GlcNAc...) asparagine glycans are attached at residues N163 and N166. The helical transmembrane segment at 179–196 threads the bilayer; it reads AMSVTLLSGIIQFCLGVC. Residues 197–208 are Cytoplasmic-facing; sequence RFGFVAIYLTEP. The helical transmembrane segment at 209–230 threads the bilayer; it reads LVRGFTTAAAVHVFTSMLKYLF. The Extracellular segment spans residues 231–243; the sequence is GVKTKRYSGIFSV. The segment at residues 244–252 is an intramembrane region (helical); the sequence is VYSTVAVLQ. Residues 253–258 are Extracellular-facing; that stretch reads NVKNLN. A helical transmembrane segment spans residues 259–282; it reads VCSLGVGLMVFGLLLGGKEFNERF. At 283–291 the chain is on the cytoplasmic side; the sequence is KEKLPAPIP. The helical transmembrane segment at 292-304 threads the bilayer; the sequence is LEFFAVVMGTGIS. The Extracellular portion of the chain corresponds to 305–337; it reads AGFNLHESYSVDVVGTLPLGLLPPANPDTSLFH. Residues 338 to 361 traverse the membrane as a helical segment; that stretch reads LVYVDAIAIAIVGFSVTISMAKTL. Residues 362–370 lie on the Cytoplasmic side of the membrane; the sequence is ANKHGYQVD. A helical membrane pass occupies residues 371–388; sequence GNQELIALGICNSIGSLF. At 389–396 the chain is on the extracellular side; that stretch reads QTFSISCS. The helical transmembrane segment at 397 to 406 threads the bilayer; the sequence is LSRSLVQEGT. S398 contacts salicylate. Residues 407 to 410 are Cytoplasmic-facing; the sequence is GGKT. The helical transmembrane segment at 411–429 threads the bilayer; that stretch reads QLAGCLASLMILLVILATG. The Extracellular portion of the chain corresponds to 430 to 436; that stretch reads FLFESLP. Residues 437–455 traverse the membrane as a helical segment; the sequence is QAVLSAIVIVNLKGMFMQF. Residues 456–469 are Cytoplasmic-facing; sequence SDLPFFWRTSKIEL. Residues 470-484 form a helical membrane-spanning segment; it reads TIWLTTFVSSLFLGL. A topological domain (extracellular) is located at residue D485. A helical transmembrane segment spans residues 486–497; sequence YGLITAVIIALL. Residues 498–744 lie on the Cytoplasmic side of the membrane; it reads TVIYRTQSPS…PNATPTTPEA (247 aa). Residues 505 to 718 form an extended region for STAS domain region; that stretch reads SPSYKVLGQL…AVLGSHVREA (214 aa). One can recognise an STAS domain in the interval 525 to 713; that stretch reads AYEEVKEIPG…HSIHDAVLGS (189 aa). Residues 717-744 are disordered; it reads EAMAEQEASAPPPQDDMEPNATPTTPEA.

This sequence belongs to the SLC26A/SulP transporter (TC 2.A.53) family. In terms of assembly, homodimer. Interacts (via STAS domain) with CALM; this interaction is calcium-dependent and the STAS domain interacts with only one lobe of CALM which is an elongated conformation. Interacts with MYH1. In terms of tissue distribution, highly expressed in mature outer hair cells, but not in inner hair cells or other cells of the basilar membrane and the organ of Corti.

It localises to the lateral cell membrane. It carries out the reaction 2 hydrogencarbonate(in) + chloride(out) = 2 hydrogencarbonate(out) + chloride(in). Its function is as follows. Voltage-sensitive motor protein that drives outer hair cell (OHC) electromotility (eM) and participates in sound amplification in the hearing organ. Converts changes in the transmembrane electric potential into mechanical displacements resulting in the coupling of its expansion to movement of a charged voltage sensor across the lipid membrane. The nature of the voltage sensor is not completely clear, and two models compete. In the first model, acts as an incomplete transporter where intracellular chloride anion acts as extrinsic voltage sensor that drives conformational change in the protein which is sufficient to produce a length change in the plane of the membrane and hence in the length of the OHC. The second model in which multiple charged amino acid residues are distributed at the intracellular and extracellular membrane interfaces that form an intrinsic voltage sensor, whose movement produces the non-linear capacitance (NLC). However, the effective voltage sensor may be the result of a hybrid voltage sensor assembled from intrinsic charge (charged residues) and extrinsic charge (bound anion). Notably, binding of anions to the anion-binding pocket partially neutralizes the intrinsic positive charge rather than to form an electrically negative sensor, therefore remaining charge may serve as voltage sensor that, after depolarization, moves from down (expanded state) to up (contracted) conformation, which is accompanied by an eccentric contraction of the intermembrane cross-sectional area of the protein as well as a major increase in the hydrophobic thickness of the protein having as consequences the plasma membrane thickening and the cell contraction after membrane depolarization. The anion-binding pocket transits from the inward-open (Down) state, where it is exposed toward the intracellular solvent in the absence of anion, to the occluded (Up) state upon anion binding. Salicylate competes for the anion-binding site and inhibits the voltage-sensor movement, and therefore inhibits the charge transfer and electromotility by displacing Cl(-) from the anion-binding site and by preventing the structural transitions to the contracted state. In addition, can act as a weak Cl(-)/HCO3 (-) antiporter across the cell membrane and so regulate the intracellular pH of the outer hair cells (OHCs), while firstly found as being unable to mediate electrogenic anion transport. Moreover, supports a role in cardiac mechanical amplification serving as an elastic element to enhance the actomyosin- based sarcomere contraction system. The sequence is that of Prestin from Meriones unguiculatus (Mongolian jird).